We begin with the raw amino-acid sequence, 1171 residues long: Myosin-B/C (1171 aa).

The Myosin motor domain maps to 105–780; that stretch reads ETVDDIGYLP…AAKELSILQR (676 aa). Residue 199 to 206 participates in ATP binding; that stretch reads GESGAGKT. The actin-binding stretch occupies residues 671-681; it reads AHFIRCLKPNE. Residues 810-1171 form a tail region; sequence IHFLTRLESN…CFEACAPDRP (362 aa).

The protein belongs to the TRAFAC class myosin-kinesin ATPase superfamily. Myosin family.

Its subcellular location is the cytoplasm. Functionally, myosins are actin-based motor molecules with ATPase activity. Unconventional myosins serve in intracellular movements. Their highly divergent tails are presumed to bind to membranous compartments, which would be moved relative to actin filaments. Plays a role in proper daughter cell budding and separation. The polypeptide is Myosin-B/C (Toxoplasma gondii).